We begin with the raw amino-acid sequence, 375 residues long: AT-rich binding protein (375 aa).

A C2H2-type 1 zinc finger spans residues 29 to 52 (IVCHTCQEELQTQDQFWKHIQDEH). The span at 110 to 119 (DDQREMDIHE) shows a compositional bias: basic and acidic residues. Positions 110–142 (DDQREMDIHEAQQQQHQQQQQHQQQQQLQQQQQ) are disordered. A compositionally biased stretch (low complexity) spans 121–142 (QQQQHQQQQQHQQQQQLQQQQQ). C2H2-type zinc fingers lie at residues 308-332 (YICD…RVVH) and 338-361 (FNCE…KKKH).

The protein resides in the nucleus. May be a transcription factor for genes having (A+T) stretches in their promoter and/or enhancer regions. Binds to AT rich DNA. In Drosophila pseudoobscura pseudoobscura (Fruit fly), this protein is AT-rich binding protein.